Here is a 940-residue protein sequence, read N- to C-terminus: Phagocyte signaling-impaired protein (940 aa).

The TPR repeat unit spans residues 77 to 110; it reads STTLHVMTLCYKETDQLDKICQIFTSASKQLPGN.

It belongs to the MDM20/NAA25 family. As to quaternary structure, component of the N-terminal acetyltransferase B (NatB) complex.

The protein localises to the lysosome. Functionally, non-catalytic subunit of the NatB complex which catalyzes acetylation of the N-terminal methionine residues of proteins beginning with Met-Asp or Met-Glu. Has 2 roles in the larval immune response: required both for the phagocytic degradation of internalized bacteria and for the induction of Defensin in the fat body. Within the phagocytic blood cells, has a role in detection of infection and activation of the humoral immune response. The chain is Phagocyte signaling-impaired protein from Aedes aegypti (Yellowfever mosquito).